The following is a 763-amino-acid chain: Protein CHROMATIN REMODELING 19 (763 aa).

2 disordered regions span residues 1–43 and 114–149; these read MKRD…TPSI and EDEE…RGED. Residues 23–34 are compositionally biased toward basic residues; the sequence is VLKRPRTPKKTR. Positions 114-135 are enriched in acidic residues; the sequence is EDEEASDDDDDEAESSASEDEF. The Helicase ATP-binding domain maps to 226–404; that stretch reads LLYKKGIEGA…WSLLEFMLPD (179 aa). 239-246 contributes to the ATP binding site; sequence DEMGLGKT. The short motif at 353-356 is the DEAH box element; it reads DEAH. Positions 462–482 form a coiled coil; sequence RKQEDAYKEAIEEYRAASQAR. The short motif at 520 to 527 is the Nuclear localization signal element; that stretch reads IRRIYSDE. The Helicase C-terminal domain occupies 592–742; that stretch reads TLAELLPSMK…AAVLESGVHV (151 aa).

It belongs to the SNF2/RAD54 helicase family. Interacts with SUVR2 and itself.

The protein resides in the nucleus. Functionally, DNA helicase that possesses intrinsic ATP-dependent nucleosome-remodeling activity and is both required for DNA repair and heterochromatin organization. Promotes DNA end resection of double-strand breaks (DSBs) following DNA damage: probably acts by weakening histone DNA interactions in nucleosomes flanking DSBs. Probable chromatin remodeling factor. Probable helicase-like transcription factor involved in transcriptional gene silencing. Associates with SUVR2 and contributes to transcriptional gene silencing at RNA-directed DNA methylation (RdDM) target loci but also at RdDM-independent target loci. May be involved in nucleosome positioning to form ordered nucleosome arrays on chromatin. The polypeptide is Protein CHROMATIN REMODELING 19 (Arabidopsis thaliana (Mouse-ear cress)).